Here is a 149-residue protein sequence, read N- to C-terminus: D-aminoacyl-tRNA deacylase (149 aa).

The short motif at 137 to 138 is the Gly-cisPro motif, important for rejection of L-amino acids element; it reads GP.

The protein belongs to the DTD family. In terms of assembly, homodimer.

It localises to the cytoplasm. It carries out the reaction glycyl-tRNA(Ala) + H2O = tRNA(Ala) + glycine + H(+). The catalysed reaction is a D-aminoacyl-tRNA + H2O = a tRNA + a D-alpha-amino acid + H(+). In terms of biological role, an aminoacyl-tRNA editing enzyme that deacylates mischarged D-aminoacyl-tRNAs. Also deacylates mischarged glycyl-tRNA(Ala), protecting cells against glycine mischarging by AlaRS. Acts via tRNA-based rather than protein-based catalysis; rejects L-amino acids rather than detecting D-amino acids in the active site. By recycling D-aminoacyl-tRNA to D-amino acids and free tRNA molecules, this enzyme counteracts the toxicity associated with the formation of D-aminoacyl-tRNA entities in vivo and helps enforce protein L-homochirality. The chain is D-aminoacyl-tRNA deacylase from Clostridium tetani (strain Massachusetts / E88).